The following is a 340-amino-acid chain: Protein B17 (340 aa).

The protein belongs to the orthopoxvirus B17 protein family.

This Vaccinia virus (strain Western Reserve) (VACV) protein is Protein B17.